The sequence spans 179 residues: Ubiquitin-conjugating enzyme E2 C (179 aa).

The interval 1 to 31 is disordered; that stretch reads MASQNVDPAAASSVASRKGQESGTSAARGSV. The UBC core domain occupies 30-179; that stretch reads SVGKRLQQEL…YQKQVREKEI (150 aa). Catalysis depends on cysteine 114, which acts as the Glycyl thioester intermediate.

It belongs to the ubiquitin-conjugating enzyme family. As to quaternary structure, component of the APC/C complex. Autoubiquitinated by the APC/C complex, leading to its degradation by the proteasome.

It catalyses the reaction S-ubiquitinyl-[E1 ubiquitin-activating enzyme]-L-cysteine + [E2 ubiquitin-conjugating enzyme]-L-cysteine = [E1 ubiquitin-activating enzyme]-L-cysteine + S-ubiquitinyl-[E2 ubiquitin-conjugating enzyme]-L-cysteine.. The catalysed reaction is S-ubiquitinyl-[E1 ubiquitin-activating enzyme]-L-cysteine + [acceptor protein]-L-lysine = [E1 ubiquitin-activating enzyme]-L-cysteine + N(6)-monoubiquitinyl-[acceptor protein]-L-lysine.. Its pathway is protein modification; protein ubiquitination. Catalyzes the covalent attachment of ubiquitin to other proteins. Acts as an essential factor of the anaphase promoting complex/cyclosome (APC/C), a cell cycle-regulated ubiquitin ligase that controls progression through mitosis. Acts by initiating 'Lys-11'-linked polyubiquitin chains on APC/C substrates, leading to the degradation of APC/C substrates by the proteasome and promoting mitotic exit. The chain is Ubiquitin-conjugating enzyme E2 C (ube2c) from Xenopus laevis (African clawed frog).